We begin with the raw amino-acid sequence, 303 residues long: Bifunctional protein FolD (303 aa).

NADP(+) contacts are provided by residues 175–177 (GVS) and Ile-243.

The protein belongs to the tetrahydrofolate dehydrogenase/cyclohydrolase family. As to quaternary structure, homodimer.

The enzyme catalyses (6R)-5,10-methylene-5,6,7,8-tetrahydrofolate + NADP(+) = (6R)-5,10-methenyltetrahydrofolate + NADPH. It catalyses the reaction (6R)-5,10-methenyltetrahydrofolate + H2O = (6R)-10-formyltetrahydrofolate + H(+). It functions in the pathway one-carbon metabolism; tetrahydrofolate interconversion. Functionally, catalyzes the oxidation of 5,10-methylenetetrahydrofolate to 5,10-methenyltetrahydrofolate and then the hydrolysis of 5,10-methenyltetrahydrofolate to 10-formyltetrahydrofolate. This chain is Bifunctional protein FolD, found in Xanthomonas euvesicatoria pv. vesicatoria (strain 85-10) (Xanthomonas campestris pv. vesicatoria).